The chain runs to 397 residues: Lysophospholipid transporter LplT (397 aa).

Residues 1–17 (MSESVHTNTSLWSKGMK) lie on the Periplasmic side of the membrane. Residues 18–38 (AVIVAQFLSAFGDNALLFATL) form a helical membrane-spanning segment. Topologically, residues 39–52 (ALLKAQFYPEWSQP) are cytoplasmic. A helical transmembrane segment spans residues 53-73 (ILQMVFVGAYILFAPFVGQVA). Residues 74–90 (DSFAKGRVMMFANGLKL) lie on the Periplasmic side of the membrane. The chain crosses the membrane as a helical span at residues 91 to 111 (LGAASICFGINPFLGYTLVGV). Residues 112 to 144 (GAAAYSPAKYGILGELTTGSKLVKANGLMEAST) are Cytoplasmic-facing. The helical transmembrane segment at 145–165 (IAAILLGSVAGGVLADWHVLV) threads the bilayer. A topological domain (periplasmic) is located at residue A166. The chain crosses the membrane as a helical span at residues 167–187 (LAACALAYGGAVVANIYIPKL). At 188 to 226 (AAARPGQSWNLINMTRSFLNACTSLWRNGETRFSLVGTS) the chain is on the cytoplasmic side. A helical membrane pass occupies residues 227–247 (LFWGAGVTLRFLLVLWVPVAL). The Periplasmic segment spans residues 248–256 (GITDNATPT). A helical membrane pass occupies residues 257-277 (YLNAMVAIGIVVGAGAAAKLV). The Cytoplasmic segment spans residues 278-280 (TLE). A helical membrane pass occupies residues 281 to 301 (TVSRCMPAGILIGVVVLIFSL). The Periplasmic portion of the chain corresponds to 302–304 (QHE). Residues 305–325 (LLPAYALLMLIGVLGGFFVVP) form a helical membrane-spanning segment. The Cytoplasmic portion of the chain corresponds to 326-343 (LNALLQERGKKSVGAGNA). A helical transmembrane segment spans residues 344-364 (IAVQNLGENSAMLLMLGIYSL). The Periplasmic segment spans residues 365 to 366 (AV). The helical transmembrane segment at 367–387 (MVGIPVVPIGIGFGALFALAI) threads the bilayer. At 388–397 (TALWIWQRRH) the chain is on the cytoplasmic side.

This sequence belongs to the major facilitator superfamily. LplT (TC 2.A.1.42) family.

The protein localises to the cell inner membrane. Functionally, catalyzes the facilitated diffusion of 2-acyl-glycero-3-phosphoethanolamine (2-acyl-GPE) into the cell. This chain is Lysophospholipid transporter LplT, found in Escherichia coli (strain SMS-3-5 / SECEC).